An 84-amino-acid polypeptide reads, in one-letter code: Cell division topological specificity factor (84 aa).

It belongs to the MinE family.

Functionally, prevents the cell division inhibition by proteins MinC and MinD at internal division sites while permitting inhibition at polar sites. This ensures cell division at the proper site by restricting the formation of a division septum at the midpoint of the long axis of the cell. In Pseudomonas syringae pv. syringae (strain B728a), this protein is Cell division topological specificity factor.